A 200-amino-acid polypeptide reads, in one-letter code: TATA-box-binding protein (200 aa).

Repeat copies occupy residues 25–101 and 115–192.

Belongs to the TBP family. In terms of assembly, belongs to the TFIID complex together with the TBP-associated factors (TAFs). Binds DNA as monomer.

It is found in the nucleus. In terms of biological role, general transcription factor that functions at the core of the DNA-binding multiprotein factor TFIID. Binding of TFIID to the TATA box is the initial transcriptional step of the pre-initiation complex (PIC), playing a role in the activation of eukaryotic genes transcribed by RNA polymerase II. In Nicotiana tabacum (Common tobacco), this protein is TATA-box-binding protein.